Here is a 1296-residue protein sequence, read N- to C-terminus: Phosphoribosylformylglycinamidine synthase (1296 aa).

Residues 304–323 (WPGAATGSGGEIRDEGATGR) form a disordered region. ATP is bound by residues 306–317 (GAATGSGGEIRD) and A677. Residues D678, E717, N721, and D885 each coordinate Mg(2+). An ATP-binding site is contributed by S887. Residues 1000–1013 (PDCADQEHQAKQDE) show a composition bias toward basic and acidic residues. The tract at residues 1000 to 1019 (PDCADQEHQAKQDESDPGLN) is disordered. One can recognise a Glutamine amidotransferase type-1 domain in the interval 1043–1296 (VAVLREQGVN…MFRNARKQLG (254 aa)). The Nucleophile role is filled by C1136. Residues H1261 and E1263 contribute to the active site.

The protein in the N-terminal section; belongs to the FGAMS family. Monomer.

The protein resides in the cytoplasm. The catalysed reaction is N(2)-formyl-N(1)-(5-phospho-beta-D-ribosyl)glycinamide + L-glutamine + ATP + H2O = 2-formamido-N(1)-(5-O-phospho-beta-D-ribosyl)acetamidine + L-glutamate + ADP + phosphate + H(+). The protein operates within purine metabolism; IMP biosynthesis via de novo pathway; 5-amino-1-(5-phospho-D-ribosyl)imidazole from N(2)-formyl-N(1)-(5-phospho-D-ribosyl)glycinamide: step 1/2. Phosphoribosylformylglycinamidine synthase involved in the purines biosynthetic pathway. Catalyzes the ATP-dependent conversion of formylglycinamide ribonucleotide (FGAR) and glutamine to yield formylglycinamidine ribonucleotide (FGAM) and glutamate. The chain is Phosphoribosylformylglycinamidine synthase from Yersinia pestis bv. Antiqua (strain Antiqua).